The following is a 517-amino-acid chain: Optineurin (517 aa).

Coiled-coil stretches lie at residues 15 to 127 and 174 to 453; these read NLGS…DLVA and KAES…LGRH. 2 disordered regions span residues 216-237 and 454-488; these read KLEHADSSAQTSLPSAAETNAS and SMSEMQRRHVPRGANPQGPTAPNNLPGGRGEWQQQ. A compositionally biased stretch (polar residues) spans 222-237; the sequence is SSAQTSLPSAAETNAS. A CCHC NOA-type zinc finger spans residues 487 to 517; the sequence is QQNIPDHACPKCGEVLPDLDSLQIHIMDCII. Residues cysteine 495, cysteine 498, histidine 511, and cysteine 515 each coordinate Zn(2+).

Its subcellular location is the cytoplasm. It is found in the perinuclear region. The protein localises to the golgi apparatus. It localises to the trans-Golgi network. The protein resides in the cytoplasmic vesicle. Its subcellular location is the recycling endosome. It is found in the autophagosome. Functionally, probably part of the TNF-alpha signaling pathway that can shift the equilibrium toward induction of cell death. May act by regulating membrane trafficking and cellular morphogenesis. This chain is Optineurin (optn), found in Danio rerio (Zebrafish).